Reading from the N-terminus, the 179-residue chain is Peptide deformylase 2 (179 aa).

Fe cation is bound by residues Cys104 and His146. Residue Glu147 is part of the active site. Position 150 (His150) interacts with Fe cation.

It belongs to the polypeptide deformylase family. The cofactor is Fe(2+).

The enzyme catalyses N-terminal N-formyl-L-methionyl-[peptide] + H2O = N-terminal L-methionyl-[peptide] + formate. Its function is as follows. Removes the formyl group from the N-terminal Met of newly synthesized proteins. Requires at least a dipeptide for an efficient rate of reaction. N-terminal L-methionine is a prerequisite for activity but the enzyme has broad specificity at other positions. This Streptomyces coelicolor (strain ATCC BAA-471 / A3(2) / M145) protein is Peptide deformylase 2.